The primary structure comprises 95 residues: Co-chaperonin GroES (95 aa).

It belongs to the GroES chaperonin family. As to quaternary structure, heptamer of 7 subunits arranged in a ring. Interacts with the chaperonin GroEL.

The protein resides in the cytoplasm. Functionally, together with the chaperonin GroEL, plays an essential role in assisting protein folding. The GroEL-GroES system forms a nano-cage that allows encapsulation of the non-native substrate proteins and provides a physical environment optimized to promote and accelerate protein folding. GroES binds to the apical surface of the GroEL ring, thereby capping the opening of the GroEL channel. This is Co-chaperonin GroES from Xanthomonas axonopodis pv. citri (strain 306).